A 183-amino-acid polypeptide reads, in one-letter code: Pectinesterase inhibitor 8 (183 aa).

The signal sequence occupies residues 1–30 (MAQRASRRPAAAAAAVVVAVVLAVSGGVGA). 2 cysteine pairs are disulfide-bonded: Cys36–Cys51 and Cys107–Cys147.

It belongs to the PMEI family.

The protein resides in the secreted. The protein localises to the extracellular space. It localises to the apoplast. Functionally, pectin methylesterase (PME) inhibitor that inhibits PME in vitro. The sequence is that of Pectinesterase inhibitor 8 from Oryza sativa subsp. japonica (Rice).